A 429-amino-acid chain; its full sequence is Glutamate-1-semialdehyde 2,1-aminomutase 1 (429 aa).

Position 268 is an N6-(pyridoxal phosphate)lysine (Lys268).

It belongs to the class-III pyridoxal-phosphate-dependent aminotransferase family. HemL subfamily. As to quaternary structure, homodimer. Pyridoxal 5'-phosphate serves as cofactor.

It is found in the cytoplasm. The catalysed reaction is (S)-4-amino-5-oxopentanoate = 5-aminolevulinate. Its pathway is porphyrin-containing compound metabolism; protoporphyrin-IX biosynthesis; 5-aminolevulinate from L-glutamyl-tRNA(Glu): step 2/2. The chain is Glutamate-1-semialdehyde 2,1-aminomutase 1 from Staphylococcus saprophyticus subsp. saprophyticus (strain ATCC 15305 / DSM 20229 / NCIMB 8711 / NCTC 7292 / S-41).